Consider the following 405-residue polypeptide: Tryptophan synthase beta chain (405 aa).

N6-(pyridoxal phosphate)lysine is present on lysine 98.

Belongs to the TrpB family. As to quaternary structure, tetramer of two alpha and two beta chains. The cofactor is pyridoxal 5'-phosphate.

It carries out the reaction (1S,2R)-1-C-(indol-3-yl)glycerol 3-phosphate + L-serine = D-glyceraldehyde 3-phosphate + L-tryptophan + H2O. Its pathway is amino-acid biosynthesis; L-tryptophan biosynthesis; L-tryptophan from chorismate: step 5/5. Its function is as follows. The beta subunit is responsible for the synthesis of L-tryptophan from indole and L-serine. The protein is Tryptophan synthase beta chain of Xylella fastidiosa (strain M23).